We begin with the raw amino-acid sequence, 244 residues long: DNA repair protein RecO (244 aa).

The protein belongs to the RecO family.

Functionally, involved in DNA repair and RecF pathway recombination. The sequence is that of DNA repair protein RecO from Ehrlichia chaffeensis (strain ATCC CRL-10679 / Arkansas).